A 520-amino-acid chain; its full sequence is Fumarate hydratase, mitochondrial (520 aa).

The N-terminal 39 residues, 1–39 (MASVAHISTAKAIFRAGGLPCRRLITPTLTGLPLKTHRM), are a transit peptide targeting the mitochondrion. Residues 153–155 (SGT), 184–187 (HPND), 194–196 (SSN), and Thr-242 each bind substrate. His-243 functions as the Proton donor/acceptor in the catalytic mechanism. Ser-373 is an active-site residue. Substrate contacts are provided by residues Ser-374 and 379 to 381 (KVN).

Belongs to the class-II fumarase/aspartase family. Fumarase subfamily. Homotetramer.

The protein resides in the mitochondrion matrix. It is found in the cytoplasm. It localises to the nucleus. It carries out the reaction (S)-malate = fumarate + H2O. It functions in the pathway carbohydrate metabolism; tricarboxylic acid cycle; (S)-malate from fumarate: step 1/1. Its function is as follows. Catalyzes the reversible stereospecific interconversion of fumarate to L-malate. In mitochondrion, catalyzes the hydration of fumarate to L-malate in the tricarboxylic acid (TCA) cycle to facilitate a transition step in the production of energy in the form of NADH. In cytoplasm and nucleus, involved in DNA repair in response to DNA damage: following DNA double-strand breaks (DSBs), translocates from the cytosol to the nucleus and promotes DNA repair by catalyzing the dehydration of L-malate to fumarate. This chain is Fumarate hydratase, mitochondrial (fum1), found in Schizosaccharomyces pombe (strain 972 / ATCC 24843) (Fission yeast).